A 513-amino-acid chain; its full sequence is V-type proton ATPase subunit B, kidney isoform (513 aa).

The span at 1–18 (MATTVDSRSSGFTGNSCD) shows a compositional bias: polar residues. Residues 1–21 (MATTVDSRSSGFTGNSCDPGT) are disordered. Arg-394 is an ATP binding site. A PDZ-binding motif is present at residues 510–513 (DTAL).

The protein belongs to the ATPase alpha/beta chains family. V-ATPase is a heteromultimeric enzyme made up of two complexes: the ATP-hydrolytic V1 complex and the proton translocation V0 complex. The V1 complex consists of three catalytic AB heterodimers that form a heterohexamer, three peripheral stalks each consisting of EG heterodimers, one central rotor including subunits D and F, and the regulatory subunits C and H. The proton translocation complex V0 consists of the proton transport subunit a, a ring of proteolipid subunits c9c'', rotary subunit d, subunits e and f, and the accessory subunits ATP6AP1/Ac45 and ATP6AP2/PRR. Forms a complex with NHERF1 and SCL4A7. As to expression, highly expressed in the kidney; found in early distal nephron, encompassing thick ascending limbs and distal convoluted tubules and in the alpha-intercalated cells of the cortical collecting ducts (at protein level). Expressed in the olfactory epithelium (at protein level). Expressed at lower levels in the testis.

Its subcellular location is the apical cell membrane. It localises to the basolateral cell membrane. In terms of biological role, non-catalytic subunit of the V1 complex of vacuolar(H+)-ATPase (V-ATPase), a multisubunit enzyme composed of a peripheral complex (V1) that hydrolyzes ATP and a membrane integral complex (V0) that translocates protons. V-ATPase is responsible for acidifying and maintaining the pH of intracellular compartments and in some cell types, is targeted to the plasma membrane, where it is responsible for acidifying the extracellular environment. Essential for the proper assembly and activity of V-ATPase. In renal intercalated cells, mediates secretion of protons (H+) into the urine thereby ensuring correct urinary acidification. Required for optimal olfactory function by mediating the acidification of the nasal olfactory epithelium. The protein is V-type proton ATPase subunit B, kidney isoform (Atp6v1b1) of Mus musculus (Mouse).